A 347-amino-acid chain; its full sequence is S-adenosylmethionine:tRNA ribosyltransferase-isomerase (347 aa).

This sequence belongs to the QueA family. As to quaternary structure, monomer.

It localises to the cytoplasm. The catalysed reaction is 7-aminomethyl-7-carbaguanosine(34) in tRNA + S-adenosyl-L-methionine = epoxyqueuosine(34) in tRNA + adenine + L-methionine + 2 H(+). The protein operates within tRNA modification; tRNA-queuosine biosynthesis. Its function is as follows. Transfers and isomerizes the ribose moiety from AdoMet to the 7-aminomethyl group of 7-deazaguanine (preQ1-tRNA) to give epoxyqueuosine (oQ-tRNA). In Exiguobacterium sibiricum (strain DSM 17290 / CCUG 55495 / CIP 109462 / JCM 13490 / 255-15), this protein is S-adenosylmethionine:tRNA ribosyltransferase-isomerase.